The following is a 95-amino-acid chain: Large ribosomal subunit protein eL37z (95 aa).

Residues Cys19, Cys22, Cys34, and Cys37 each contribute to the Zn(2+) site. The segment at 19–37 adopts a C4-type zinc-finger fold; it reads CVRCGRRSFHIQKSRCSAC.

It belongs to the eukaryotic ribosomal protein eL37 family. Zn(2+) serves as cofactor.

In terms of biological role, binds to the 23S rRNA. This Arabidopsis thaliana (Mouse-ear cress) protein is Large ribosomal subunit protein eL37z (RPL37A).